The chain runs to 281 residues: Ribosomal RNA small subunit methyltransferase I (281 aa).

This sequence belongs to the methyltransferase superfamily. RsmI family.

Its subcellular location is the cytoplasm. The catalysed reaction is cytidine(1402) in 16S rRNA + S-adenosyl-L-methionine = 2'-O-methylcytidine(1402) in 16S rRNA + S-adenosyl-L-homocysteine + H(+). In terms of biological role, catalyzes the 2'-O-methylation of the ribose of cytidine 1402 (C1402) in 16S rRNA. The sequence is that of Ribosomal RNA small subunit methyltransferase I from Pasteurella multocida (strain Pm70).